Here is a 137-residue protein sequence, read N- to C-terminus: Protein Flattop homolog (137 aa).

This sequence belongs to the Flattop family.

Its subcellular location is the cytoplasm. It is found in the cytoskeleton. The protein resides in the flagellum axoneme. Its function is as follows. Microtubule inner protein (MIP) part of the dynein-decorated doublet microtubules (DMTs) in cilia axoneme. Acts as a regulator of cilium basal body docking and positioning in mono- and multiciliated cells. Regulates basal body docking and cilia formation in multiciliated lung cells. Regulates kinocilium positioning and stereocilia bundle morphogenesis in the inner ear. This chain is Protein Flattop homolog, found in Chlamydomonas reinhardtii (Chlamydomonas smithii).